The following is a 348-amino-acid chain: Fe-S cluster assembly protein DRE2 (348 aa).

An N-terminal SAM-like domain region spans residues 1–162 (MSQYKTGLLL…KKASSSTSNL (162 aa)). Residues 137 to 170 (KTNNTKLQSGSKLPTFKKASSSTSNLPSFKKADH) are disordered. A compositionally biased stretch (polar residues) spans 144–163 (QSGSKLPTFKKASSSTSNLP). The segment at 163-242 (PSFKKADHSR…EEELIDEDGS (80 aa)) is linker. Ser-206 is subject to Phosphoserine. The [2Fe-2S] cluster site is built by Cys-252, Cys-263, Cys-266, and Cys-268. The segment at 252-268 (CGKSKTKKKKACKDCTC) is fe-S binding site A. 4 residues coordinate [4Fe-4S] cluster: Cys-311, Cys-314, Cys-322, and Cys-325. 2 short sequence motifs (cx2C motif) span residues 311–314 (CGSC) and 322–325 (CSGC). The segment at 311-325 (CGSCSLGDAFRCSGC) is fe-S binding site B.

This sequence belongs to the anamorsin family. In terms of assembly, monomer. Interacts with TAH18. Interacts with MIA40. [2Fe-2S] cluster is required as a cofactor. The cofactor is [4Fe-4S] cluster.

It is found in the cytoplasm. The protein localises to the mitochondrion intermembrane space. Its function is as follows. Component of the cytosolic iron-sulfur (Fe-S) protein assembly (CIA) machinery required for the maturation of extramitochondrial Fe-S proteins. Part of an electron transfer chain functioning in an early step of cytosolic Fe-S biogenesis, facilitating the de novo assembly of a [4Fe-4S] cluster on the scaffold complex CFD1-NBP35. Electrons are transferred to DRE2 from NADPH via the FAD- and FMN-containing protein TAH18. TAH18-DRE2 are also required for the assembly of the diferric tyrosyl radical cofactor of ribonucleotide reductase (RNR), probably by providing electrons for reduction during radical cofactor maturation in the catalytic small subunit RNR2. The polypeptide is Fe-S cluster assembly protein DRE2 (Saccharomyces cerevisiae (strain Lalvin EC1118 / Prise de mousse) (Baker's yeast)).